Reading from the N-terminus, the 316-residue chain is Ribosomal RNA small subunit methyltransferase H (316 aa).

S-adenosyl-L-methionine contacts are provided by residues 32–34 (AGH), D52, F79, D100, and Q107.

It belongs to the methyltransferase superfamily. RsmH family.

Its subcellular location is the cytoplasm. The enzyme catalyses cytidine(1402) in 16S rRNA + S-adenosyl-L-methionine = N(4)-methylcytidine(1402) in 16S rRNA + S-adenosyl-L-homocysteine + H(+). In terms of biological role, specifically methylates the N4 position of cytidine in position 1402 (C1402) of 16S rRNA. This is Ribosomal RNA small subunit methyltransferase H from Lysinibacillus sphaericus (strain C3-41).